We begin with the raw amino-acid sequence, 513 residues long: Melianol synthase CYP71BQ4 (513 aa).

A helical transmembrane segment spans residues 10–30 (MLHLPSLPVLLSFLLFLLMLI). Residue Cys-451 participates in heme binding.

It belongs to the cytochrome P450 family. Requires heme as cofactor. As to expression, accumulates in mature fruits and in juice vesicles.

It localises to the membrane. It catalyses the reaction dihydroniloticin + 2 reduced [NADPH--hemoprotein reductase] + 2 O2 = melianol + 2 oxidized [NADPH--hemoprotein reductase] + 3 H2O + 2 H(+). It functions in the pathway secondary metabolite biosynthesis; terpenoid biosynthesis. In terms of biological role, monooxygenase involved in the biosynthesis of limonoids triterpene natural products such as limonin, a compound with insecticidal activity responsible for the bitter taste in citrus. Catalyzes the conversion of dihydroniloticin to the protolimonoid melianol. The sequence is that of Melianol synthase CYP71BQ4 from Citrus sinensis (Sweet orange).